A 210-amino-acid polypeptide reads, in one-letter code: Small ribosomal subunit protein uS5 (210 aa).

Residues 1 to 11 (MTQPNTQTTPN) show a composition bias toward polar residues. The interval 1–56 (MTQPNTQTTPNDVPAAAEGQHQEQQQQQRRGGGRERRGGGRRGDRRGQERDSEWQE) is disordered. The segment covering 18 to 29 (EGQHQEQQQQQR) has biased composition (low complexity). The span at 32 to 56 (GGRERRGGGRRGDRRGQERDSEWQE) shows a compositional bias: basic and acidic residues. In terms of domain architecture, S5 DRBM spans 54–117 (WQERVVQIRR…ADGKKHLVKV (64 aa)).

This sequence belongs to the universal ribosomal protein uS5 family. In terms of assembly, part of the 30S ribosomal subunit. Contacts proteins S4 and S8.

Functionally, with S4 and S12 plays an important role in translational accuracy. Its function is as follows. Located at the back of the 30S subunit body where it stabilizes the conformation of the head with respect to the body. This Prochlorococcus marinus (strain MIT 9303) protein is Small ribosomal subunit protein uS5.